A 204-amino-acid chain; its full sequence is FMN-dependent NADH:quinone oxidoreductase (204 aa).

FMN is bound by residues S10, 15–17, and 139–142; these read SLS and TSGG.

Belongs to the azoreductase type 1 family. Homodimer. Requires FMN as cofactor.

It catalyses the reaction 2 a quinone + NADH + H(+) = 2 a 1,4-benzosemiquinone + NAD(+). The enzyme catalyses N,N-dimethyl-1,4-phenylenediamine + anthranilate + 2 NAD(+) = 2-(4-dimethylaminophenyl)diazenylbenzoate + 2 NADH + 2 H(+). Functionally, quinone reductase that provides resistance to thiol-specific stress caused by electrophilic quinones. In terms of biological role, also exhibits azoreductase activity. Catalyzes the reductive cleavage of the azo bond in aromatic azo compounds to the corresponding amines. The polypeptide is FMN-dependent NADH:quinone oxidoreductase (Rhizobium leguminosarum bv. trifolii (strain WSM2304)).